Consider the following 318-residue polypeptide: Glycine--tRNA ligase alpha subunit (318 aa).

Residues 298 to 318 (EAGGSSPSTSRQGEAPRGESQ) are disordered. The segment covering 300 to 309 (GGSSPSTSRQ) has biased composition (polar residues).

The protein belongs to the class-II aminoacyl-tRNA synthetase family. Tetramer of two alpha and two beta subunits.

It is found in the cytoplasm. It carries out the reaction tRNA(Gly) + glycine + ATP = glycyl-tRNA(Gly) + AMP + diphosphate. The chain is Glycine--tRNA ligase alpha subunit from Rhodopseudomonas palustris (strain BisB18).